The following is a 164-amino-acid chain: Large ribosomal subunit protein uL10 (164 aa).

The protein belongs to the universal ribosomal protein uL10 family. In terms of assembly, part of the ribosomal stalk of the 50S ribosomal subunit. The N-terminus interacts with L11 and the large rRNA to form the base of the stalk. The C-terminus forms an elongated spine to which L12 dimers bind in a sequential fashion forming a multimeric L10(L12)X complex.

Forms part of the ribosomal stalk, playing a central role in the interaction of the ribosome with GTP-bound translation factors. The protein is Large ribosomal subunit protein uL10 of Pseudoalteromonas translucida (strain TAC 125).